The primary structure comprises 661 residues: DNA ligase (661 aa).

NAD(+) contacts are provided by residues 31-35, 79-80, and glutamate 112; these read DKEYD and SL. The N6-AMP-lysine intermediate role is filled by lysine 114. Positions 135, 169, 281, and 305 each coordinate NAD(+). Residues cysteine 398, cysteine 401, cysteine 414, and cysteine 420 each contribute to the Zn(2+) site. A BRCT domain is found at 578–661; sequence QQENIFLGKT…ISEAEFEAML (84 aa).

The protein belongs to the NAD-dependent DNA ligase family. LigA subfamily. Mg(2+) is required as a cofactor. The cofactor is Mn(2+).

The catalysed reaction is NAD(+) + (deoxyribonucleotide)n-3'-hydroxyl + 5'-phospho-(deoxyribonucleotide)m = (deoxyribonucleotide)n+m + AMP + beta-nicotinamide D-nucleotide.. In terms of biological role, DNA ligase that catalyzes the formation of phosphodiester linkages between 5'-phosphoryl and 3'-hydroxyl groups in double-stranded DNA using NAD as a coenzyme and as the energy source for the reaction. It is essential for DNA replication and repair of damaged DNA. This chain is DNA ligase, found in Alkaliphilus oremlandii (strain OhILAs) (Clostridium oremlandii (strain OhILAs)).